The sequence spans 146 residues: Snaclec CTL-Eoc124 (146 aa).

The N-terminal stretch at 1 to 23 (MGRFISVSFGLLVVFLSLSGTGA) is a signal peptide. 3 cysteine pairs are disulfide-bonded: C25-C36, C53-C142, and C119-C134. The 112-residue stretch at 32–143 (YQGHCYRVFN…CSRTNNVACK (112 aa)) folds into the C-type lectin domain.

It belongs to the snaclec family. In terms of assembly, heterodimer; disulfide-linked. In terms of tissue distribution, expressed by the venom gland.

The protein resides in the secreted. Interferes with one step of hemostasis (modulation of platelet aggregation, or coagulation cascade, for example). The sequence is that of Snaclec CTL-Eoc124 from Echis ocellatus (Ocellated saw-scaled viper).